The primary structure comprises 393 residues: F-box/kelch-repeat protein At4g19865 (393 aa).

The tract at residues 1–30 is disordered; sequence MNFQVEPPEKKKTKNSSPPHSPPSSSSPSL. An F-box domain is found at 27-73; it reads SPSLSLLPEEIVVHCLARISRLYYPTLSLVSKSFRSILSSTELYATR. Kelch repeat units lie at residues 148 to 190, 191 to 237, 239 to 272, and 273 to 320; these read EIYV…FHDG, KIYV…RSGV, EGKI…ALRS, and ECMI…GGSS.

In Arabidopsis thaliana (Mouse-ear cress), this protein is F-box/kelch-repeat protein At4g19865.